Consider the following 286-residue polypeptide: Probable transport system permease protein NifC (286 aa).

6 helical membrane-spanning segments follow: residues 34–54 (LFLA…ISMI), 75–95 (IILS…IGTP), 114–134 (IFVE…LLLA), 152–172 (VIFT…ALYV), 216–236 (GLIL…MFAG), and 257–277 (IKMA…LLLL). Residues 75–278 (IILSFVTSLI…IMTFVLLLLV (204 aa)) enclose the ABC transmembrane type-1 domain.

This sequence belongs to the binding-protein-dependent transport system permease family. CysTW subfamily.

The protein localises to the cell membrane. Its function is as follows. May be involved in molybdenum transport. This Clostridium pasteurianum protein is Probable transport system permease protein NifC (nifC).